A 174-amino-acid chain; its full sequence is Vimentin-type intermediate filament-associated coiled-coil protein (174 aa).

Residues 7–97 adopt a coiled-coil conformation; that stretch reads LQIREANAHL…DQRDQMIQQL (91 aa). The interval 128–174 is disordered; the sequence is GPLPASHSHRAQLLPDGPGPPLGNNMGKEEGQDDQDDQQPAVFGTTV.

Its subcellular location is the cytoplasm. This is Vimentin-type intermediate filament-associated coiled-coil protein (Vmac) from Mus musculus (Mouse).